A 167-amino-acid chain; its full sequence is Male-specific protein scotti (167 aa).

Asparagine 30, asparagine 124, and asparagine 148 each carry an N-linked (GlcNAc...) asparagine glycan.

It belongs to the male-specific scotti family.

In terms of biological role, post-meiotically transcribed gene that has a role in late spermiogenesis; required for actin cone progression during spermatid individualization. The chain is Male-specific protein scotti from Drosophila ananassae (Fruit fly).